Consider the following 284-residue polypeptide: Putative ribosome biogenesis protein C306.07c (284 aa).

Positions 264-284 (LKKSELRAQKRGSSGEGKGNK) are disordered.

This sequence belongs to the universal ribosomal protein uL1 family. Highly divergent. In terms of assembly, component of the 90S pre-ribosomes.

It is found in the nucleus. It localises to the nucleolus. In terms of biological role, involved in rRNA-processing and ribosome biosynthesis. This chain is Putative ribosome biogenesis protein C306.07c, found in Schizosaccharomyces pombe (strain 972 / ATCC 24843) (Fission yeast).